The primary structure comprises 401 residues: Probable tRNA sulfurtransferase (401 aa).

Residues 60 to 165 (EAVMARLKHV…EDATYLTFRD (106 aa)) enclose the THUMP domain. ATP is bound by residues 183 to 184 (MI), 208 to 209 (HF), Arg-265, Gly-287, and Gln-296.

It belongs to the ThiI family.

It localises to the cytoplasm. It catalyses the reaction [ThiI sulfur-carrier protein]-S-sulfanyl-L-cysteine + a uridine in tRNA + 2 reduced [2Fe-2S]-[ferredoxin] + ATP + H(+) = [ThiI sulfur-carrier protein]-L-cysteine + a 4-thiouridine in tRNA + 2 oxidized [2Fe-2S]-[ferredoxin] + AMP + diphosphate. The enzyme catalyses [ThiS sulfur-carrier protein]-C-terminal Gly-Gly-AMP + S-sulfanyl-L-cysteinyl-[cysteine desulfurase] + AH2 = [ThiS sulfur-carrier protein]-C-terminal-Gly-aminoethanethioate + L-cysteinyl-[cysteine desulfurase] + A + AMP + 2 H(+). It participates in cofactor biosynthesis; thiamine diphosphate biosynthesis. Functionally, catalyzes the ATP-dependent transfer of a sulfur to tRNA to produce 4-thiouridine in position 8 of tRNAs, which functions as a near-UV photosensor. Also catalyzes the transfer of sulfur to the sulfur carrier protein ThiS, forming ThiS-thiocarboxylate. This is a step in the synthesis of thiazole, in the thiamine biosynthesis pathway. The sulfur is donated as persulfide by IscS. This chain is Probable tRNA sulfurtransferase, found in Bacillus licheniformis (strain ATCC 14580 / DSM 13 / JCM 2505 / CCUG 7422 / NBRC 12200 / NCIMB 9375 / NCTC 10341 / NRRL NRS-1264 / Gibson 46).